Consider the following 66-residue polypeptide: Sodium/potassium-transporting ATPase subunit gamma (66 aa).

A helical membrane pass occupies residues 29 to 46 (GGLIFAGLAFIVGLLILL).

It belongs to the FXYD family. Regulatory subunit of the sodium/potassium-transporting ATPase which is composed of a catalytic alpha subunit, an auxiliary non-catalytic beta subunit and an additional regulatory subunit. In terms of tissue distribution, expressed in the distal convoluted tubule in the kidney. Found on basolateral membranes of nephron epithelial cells.

The protein localises to the membrane. In terms of biological role, may be involved in forming the receptor site for cardiac glycoside binding or may modulate the transport function of the sodium ATPase. In Homo sapiens (Human), this protein is Sodium/potassium-transporting ATPase subunit gamma (FXYD2).